Consider the following 235-residue polypeptide: Transcriptional regulatory protein CseB (235 aa).

The Response regulatory domain maps to 6–119; that stretch reads HVLFVEDDDV…VLVARIRAVL (114 aa). A 4-aspartylphosphate modification is found at Asp-55. Residues 141-235 constitute a DNA-binding region (ompR/PhoB-type); the sequence is GGVLTFGELE…VRGFGYKLKA (95 aa).

Phosphorylated by CseC.

It localises to the cytoplasm. Its function is as follows. Member of the two-component regulatory system CseB/CseC involved in the stability of the cell envelope. CseB activates transcription of RNA polymerase sigma-E factor, in response to changes in the cell envelope. The chain is Transcriptional regulatory protein CseB (cseB) from Streptomyces avermitilis (strain ATCC 31267 / DSM 46492 / JCM 5070 / NBRC 14893 / NCIMB 12804 / NRRL 8165 / MA-4680).